Consider the following 344-residue polypeptide: Phosphoribosylformylglycinamidine cyclo-ligase (344 aa).

This sequence belongs to the AIR synthase family.

The protein localises to the cytoplasm. The catalysed reaction is 2-formamido-N(1)-(5-O-phospho-beta-D-ribosyl)acetamidine + ATP = 5-amino-1-(5-phospho-beta-D-ribosyl)imidazole + ADP + phosphate + H(+). It participates in purine metabolism; IMP biosynthesis via de novo pathway; 5-amino-1-(5-phospho-D-ribosyl)imidazole from N(2)-formyl-N(1)-(5-phospho-D-ribosyl)glycinamide: step 2/2. The polypeptide is Phosphoribosylformylglycinamidine cyclo-ligase (Neisseria meningitidis serogroup C (strain 053442)).